The primary structure comprises 263 residues: Hydroxyacylglutathione hydrolase (263 aa).

Zn(2+) is bound by residues His56, His58, Asp60, His61, His115, Asp135, and His175.

The protein belongs to the metallo-beta-lactamase superfamily. Glyoxalase II family. Monomer. Zn(2+) serves as cofactor.

The catalysed reaction is an S-(2-hydroxyacyl)glutathione + H2O = a 2-hydroxy carboxylate + glutathione + H(+). The protein operates within secondary metabolite metabolism; methylglyoxal degradation; (R)-lactate from methylglyoxal: step 2/2. Its function is as follows. Thiolesterase that catalyzes the hydrolysis of S-D-lactoyl-glutathione to form glutathione and D-lactic acid. In Nitrosococcus oceani (strain ATCC 19707 / BCRC 17464 / JCM 30415 / NCIMB 11848 / C-107), this protein is Hydroxyacylglutathione hydrolase.